The sequence spans 320 residues: FHA domain-containing protein FHA2 (320 aa).

An N-acetylalanine modification is found at Ala2. Positions 32-89 (IILGRNSKKATVDVDLSSLGGGMNISRNHARIFYDFTRRRFSLEVLGKNGCLVEGVLH) constitute an FHA domain. The interval 138–211 (VPYHNYQSGP…REGRSKVDRE (74 aa)) is disordered. The segment covering 163–178 (EYDDEDDDDDDDEEDD) has biased composition (acidic residues). The segment covering 198–210 (GEKKREGRSKVDR) has biased composition (basic and acidic residues).

In terms of tissue distribution, widely expressed.

It is found in the nucleus. Functionally, may play a role in the control of plant organ development and specifically in the regulation of stamen development. Does not show transactivation activity in yeast. This chain is FHA domain-containing protein FHA2, found in Arabidopsis thaliana (Mouse-ear cress).